A 298-amino-acid chain; its full sequence is MSTSIPDVAVHDSPAIAAPLRWVGMDGIVVPVQLTIADGGQHVIGRARAQIDLPAMEVKGIHMSRLYRLLDTHAVEPLTPVGICGLLSAMVNSHADCASTAARVDWYFDWLRRVPALVSNDLSGWRGYPVWLRAEYSAGHVQFWLCVEVGYSSTCPCSAALARQMLADAFLQEHVEVSALSPETVADWLRSNGSYATPHSQRSLARIEVALTEQAVELGLPALVDCAERILSTPVQAAVRRVDEQAFARLNGANLMYVEDATRRLQHGLAIHYSAFRVHVRHLESLHPHDAVASTADE.

Belongs to the GTP cyclohydrolase IV family.

The catalysed reaction is GTP + H2O = 7,8-dihydroneopterin 3'-triphosphate + formate + H(+). Its pathway is cofactor biosynthesis; 7,8-dihydroneopterin triphosphate biosynthesis; 7,8-dihydroneopterin triphosphate from GTP: step 1/1. Converts GTP to 7,8-dihydroneopterin triphosphate. The protein is GTP cyclohydrolase FolE2 of Xylella fastidiosa (strain M12).